Reading from the N-terminus, the 262-residue chain is tRNA pseudouridine synthase A (262 aa).

The active-site Nucleophile is aspartate 54. Tyrosine 113 lines the substrate pocket.

This sequence belongs to the tRNA pseudouridine synthase TruA family. In terms of assembly, homodimer.

It catalyses the reaction uridine(38/39/40) in tRNA = pseudouridine(38/39/40) in tRNA. In terms of biological role, formation of pseudouridine at positions 38, 39 and 40 in the anticodon stem and loop of transfer RNAs. This is tRNA pseudouridine synthase A from Lactobacillus acidophilus (strain ATCC 700396 / NCK56 / N2 / NCFM).